The chain runs to 286 residues: Putative WUSCHEL-related homeobox 2 (286 aa).

Disordered regions lie at residues 1–25 (MAPAVQQQQSGGGGGSTGAAAVGST) and 128–152 (SSSSSCGGGLNEDANSLLSPTSPTT). The segment at residues 23–87 (GSTTRWCPTP…NHKARDRQKL (65 aa)) is a DNA-binding region (homeobox; WUS-type).

Belongs to the WUS homeobox family.

It localises to the nucleus. Its function is as follows. Transcription factor which may be involved in developmental processes. The polypeptide is Putative WUSCHEL-related homeobox 2 (WOX2) (Oryza sativa subsp. indica (Rice)).